We begin with the raw amino-acid sequence, 436 residues long: GTPase Der (436 aa).

EngA-type G domains are found at residues 4-167 and 175-351; these read PTVA…PVEE and IRFS…ESQN. GTP contacts are provided by residues 10 to 17, 57 to 61, 119 to 122, 181 to 188, 229 to 233, and 294 to 297; these read GRPNVGKS, DTGGI, NKVD, DTAGM, and NKWD. The KH-like domain occupies 352–436; sequence KRIPSAVLND…PIHLIARKRK (85 aa).

It belongs to the TRAFAC class TrmE-Era-EngA-EngB-Septin-like GTPase superfamily. EngA (Der) GTPase family. As to quaternary structure, associates with the 50S ribosomal subunit.

Functionally, GTPase that plays an essential role in the late steps of ribosome biogenesis. The sequence is that of GTPase Der from Streptococcus pyogenes serotype M28 (strain MGAS6180).